A 188-amino-acid chain; its full sequence is MKLVPVALMYLGSLAFLGADTARLDVAAEFRKKWNKWALSRGKRELRLSSSYPTGIADLKAGPAQTVIRPQDVKGSSRSPQASIPDAARIRVKRYRQSMNNFQGLRSFGCRFGTCTVQKLAHQIYQFTDKDKDGVAPRSKISPQGYGRRRRRSLPEASLGRTLRSQEPQAHGAPASPAHQVLATLFRI.

The first 21 residues, 1-21, serve as a signal peptide directing secretion; sequence MKLVPVALMYLGSLAFLGADT. Residue arginine 41 is modified to Arginine amide. A propeptide spanning residues 45-92 is cleaved from the precursor; sequence ELRLSSSYPTGIADLKAGPAQTVIRPQDVKGSSRSPQASIPDAARIRV. A disulfide bridge links cysteine 110 with cysteine 115. A disordered region spans residues 131–177; it reads DKDGVAPRSKISPQGYGRRRRRSLPEASLGRTLRSQEPQAHGAPASP. Tyrosine 146 is modified (tyrosine amide). The propeptide at 153–188 is preproAM C-terminal fragment; sequence SLPEASLGRTLRSQEPQAHGAPASPAHQVLATLFRI.

The protein belongs to the adrenomedullin family. Highly expressed in adrenal glands, lung and kidney.

The protein localises to the secreted. Its function is as follows. Adrenomedullin/ADM and proadrenomedullin N-20 terminal peptide/PAMP are peptide hormones that act as potent hypotensive and vasodilatator agents. Numerous actions have been reported most related to the physiologic control of fluid and electrolyte homeostasis. Functionally, ADM function is mediated by the CALCRL-RAMP2 and CALCRL-RAMP3 receptor complexes with ADM showing the highest potency for the CALCRL-RAMP2 complex. This chain is Pro-adrenomedullin (ADM), found in Sus scrofa (Pig).